Consider the following 292-residue polypeptide: Early E4 34 kDa protein (292 aa).

The protein belongs to the adenoviridae E4 30 to 34 kDa protein family. As to quaternary structure, interacts with E1B-55k.

The protein localises to the host nucleus. The protein resides in the host cytoplasm. Its function is as follows. Plays a major role to prevent cellular inhibition of viral genome replication by nuclear bodies. Assembles an SCF-like E3 ubiquitin ligase complex based on the cellular proteins ELOB, ELOC, CUL5 and RBX1, in cooperation with viral E1B-55K. This viral RING-type ligase ubiquitinates cellular substrates prior to proteasomal degradation: p53/TP53, LIG4, MRE11-RAD50-NBS1 (MRN) complex, ITGA3, DAXX and BLM. This chain is Early E4 34 kDa protein, found in Human adenovirus D serotype 9 (HAdV-9).